A 561-amino-acid chain; its full sequence is Asparagine synthetase [glutamine-hydrolyzing] (561 aa).

Residue cysteine 2 is the For GATase activity of the active site. One can recognise a Glutamine amidotransferase type-2 domain in the interval 2-191 (CGIWALFGSD…PGHYEVLDLK (190 aa)). L-glutamine is bound by residues 49 to 53 (RLAVV), 75 to 77 (NGE), and aspartate 97. The 324-residue stretch at 213-536 (HALYDSVEKL…PGRADWLTHY (324 aa)) folds into the Asparagine synthetase domain. ATP contacts are provided by residues leucine 256, isoleucine 288, and 363–364 (SG). Position 385 is an N6-acetyllysine (lysine 385). At threonine 545 the chain carries Phosphothreonine. Serine 557 bears the Phosphoserine mark.

It catalyses the reaction L-aspartate + L-glutamine + ATP + H2O = L-asparagine + L-glutamate + AMP + diphosphate + H(+). It participates in amino-acid biosynthesis; L-asparagine biosynthesis; L-asparagine from L-aspartate (L-Gln route): step 1/1. This chain is Asparagine synthetase [glutamine-hydrolyzing] (ASNS), found in Cricetulus griseus (Chinese hamster).